The chain runs to 380 residues: Glucose-1-phosphate adenylyltransferase (380 aa).

Alpha-D-glucose 1-phosphate contacts are provided by residues glycine 164, 179–180 (EK), and serine 190.

It belongs to the bacterial/plant glucose-1-phosphate adenylyltransferase family. As to quaternary structure, homotetramer.

It carries out the reaction alpha-D-glucose 1-phosphate + ATP + H(+) = ADP-alpha-D-glucose + diphosphate. Its pathway is glycan biosynthesis; glycogen biosynthesis. Involved in the biosynthesis of ADP-glucose, a building block required for the elongation reactions to produce glycogen. Catalyzes the reaction between ATP and alpha-D-glucose 1-phosphate (G1P) to produce pyrophosphate and ADP-Glc. This is Glucose-1-phosphate adenylyltransferase from Streptococcus pneumoniae (strain CGSP14).